The following is a 542-amino-acid chain: Valine N-monooxygenase 1 (542 aa).

Over 1-21 the chain is Cytoplasmic; that stretch reads MAMNVSTTIGLLNATSFASSS. A helical; Signal-anchor for type II membrane protein membrane pass occupies residues 22 to 42; it reads SINTVKILFVTLFISIVSTIV. At 43–542 the chain is on the lumenal side; it reads KLQKSAANKE…LAPHLYPTSP (500 aa). Asn278 carries N-linked (GlcNAc...) asparagine glycosylation. Residue Cys478 participates in heme binding. Asn506 is a glycosylation site (N-linked (GlcNAc...) asparagine).

It belongs to the cytochrome P450 family. The cofactor is heme. In terms of tissue distribution, expressed in the epidermis, the next two cortex cell layers, the endodermis and the pericycle of leaf petioles. Strong expression around the laticifers among the phloem cells and in parenchymatic cells between the protoxylem and the metaxylem cells. In the leaves, preferentially expressed in the mesophyll cells adjacent to the epidermis.

Its subcellular location is the microsome membrane. The enzyme catalyses L-valine + 2 reduced [NADPH--hemoprotein reductase] + 2 O2 = (E)-2-methylpropanal oxime + 2 oxidized [NADPH--hemoprotein reductase] + CO2 + 3 H2O + 2 H(+). It carries out the reaction L-valine + reduced [NADPH--hemoprotein reductase] + O2 = N-hydroxy-L-valine + oxidized [NADPH--hemoprotein reductase] + H2O + 2 H(+). It catalyses the reaction N-hydroxy-L-valine + reduced [NADPH--hemoprotein reductase] + O2 = N,N-dihydroxy-L-valine + oxidized [NADPH--hemoprotein reductase] + H2O + H(+). The catalysed reaction is L-isoleucine + 2 reduced [NADPH--hemoprotein reductase] + 2 O2 = (1E,2S)-2-methylbutanal oxime + 2 oxidized [NADPH--hemoprotein reductase] + CO2 + 3 H2O + 2 H(+). The enzyme catalyses L-isoleucine + reduced [NADPH--hemoprotein reductase] + O2 = N-hydroxy-L-isoleucine + oxidized [NADPH--hemoprotein reductase] + H2O + 2 H(+). It carries out the reaction N-hydroxy-L-isoleucine + reduced [NADPH--hemoprotein reductase] + O2 = N,N-dihydroxy-L-isoleucine + oxidized [NADPH--hemoprotein reductase] + H2O + H(+). It functions in the pathway secondary metabolite biosynthesis. Inhibited by tetcyclasis but not by 1-aminobenzotriazole (ABT). Its function is as follows. Involved in the biosynthesis of the cyanogenic glucosides linamarin and lotaustralin. Can use L-valine or L-isoleucine as substrate, but not L-leucine, L-phenylalanine, L-tyrosine, D-valine or D-isoleucine. Catalyzes multi-step reactions starting with two successive N-hydroxylations using L-valine and L-isoleucine as substrates leading to the formation of N,N-dihydroxy-L-valine and N,N-dihydroxy-L-isoleucine, respectively; following spontaneous reactions lead to the production of (E)-2-methylpropanal oxime and (1E,2S)-2-methylbutanal oxime, respectively. This is Valine N-monooxygenase 1 from Manihot esculenta (Cassava).